The primary structure comprises 119 residues: uncharacterized protein (119 aa).

Residues 1–22 are disordered; that stretch reads MQGQAGKRKTDGKVPSNTEQNC.

This is an uncharacterized protein from Saccharomyces cerevisiae (strain ATCC 204508 / S288c) (Baker's yeast).